Here is a 422-residue protein sequence, read N- to C-terminus: Adenosylhomocysteinase (422 aa).

Substrate-binding residues include Asp-129 and Glu-154. NAD(+) is bound at residue 155-157; sequence TTT. Residues Lys-184 and Asp-188 each coordinate substrate. Residues Asn-189, 218–223, Glu-241, Asn-276, 297–299, and Asn-344 each bind NAD(+); these read GYGWCG and AGH.

Belongs to the adenosylhomocysteinase family. NAD(+) serves as cofactor.

The protein resides in the cytoplasm. The enzyme catalyses S-adenosyl-L-homocysteine + H2O = L-homocysteine + adenosine. The protein operates within amino-acid biosynthesis; L-homocysteine biosynthesis; L-homocysteine from S-adenosyl-L-homocysteine: step 1/1. Its function is as follows. May play a key role in the regulation of the intracellular concentration of adenosylhomocysteine. The protein is Adenosylhomocysteinase of Pyrococcus abyssi (strain GE5 / Orsay).